Reading from the N-terminus, the 350-residue chain is Gene 40 protein (350 aa).

237 to 244 (AVKESGKT) provides a ligand contact to ATP.

This Bacillus phage SP01 (Bacteriophage SP01) protein is Gene 40 protein (40).